The chain runs to 283 residues: Phosphatidylglycerol--prolipoprotein diacylglyceryl transferase (283 aa).

Transmembrane regions (helical) follow at residues 20–40 (IGGF…IIGL), 60–80 (LVIW…VAFE), 94–114 (IWQG…AILV), and 121–141 (LSFW…QAIG). Arg142 lines the a 1,2-diacyl-sn-glycero-3-phospho-(1'-sn-glycerol) pocket. Helical transmembrane passes span 183 to 203 (FLYE…LFFY), 214 to 234 (GTIT…IEGL), and 248 to 268 (QVVS…LYLL).

Belongs to the Lgt family.

The protein localises to the cell inner membrane. It catalyses the reaction L-cysteinyl-[prolipoprotein] + a 1,2-diacyl-sn-glycero-3-phospho-(1'-sn-glycerol) = an S-1,2-diacyl-sn-glyceryl-L-cysteinyl-[prolipoprotein] + sn-glycerol 1-phosphate + H(+). It functions in the pathway protein modification; lipoprotein biosynthesis (diacylglyceryl transfer). Catalyzes the transfer of the diacylglyceryl group from phosphatidylglycerol to the sulfhydryl group of the N-terminal cysteine of a prolipoprotein, the first step in the formation of mature lipoproteins. In Synechocystis sp. (strain ATCC 27184 / PCC 6803 / Kazusa), this protein is Phosphatidylglycerol--prolipoprotein diacylglyceryl transferase.